A 399-amino-acid chain; its full sequence is MELERKSSGIIKSFNVLDIFSINLLYMGILSGISYPLFVSSLMKNVNLLFAIVIGAVFEIPLLLMYYKLTTKFPLNGGDYAYIRTAFSSKFYTIFGISLWLTYVLSQPILGDLVLLNFNIQNQFEQFLIVESLFPLVLLIIASKRIYAKIVDILAIFQIIIAIFIAFKSFNYQYQTFTISNTLLSALLFDLSAFIFINAISYIAGEIKNIKKSSMIGYFVSYGVVAILSILDSYSNLNILFALMPIWFFSYMPIANKIQSRLIQTMSFDKVLPEKFSKINPNVLLLIFSTETIANVLENLLGFNISFGLDGLLFIFWNFIIVAFAYLKLMNDKKLFSIVLTSLAIQIFLFFYLGYQNPIFYKFVIAGNIEYTILRIMILPIIGAIVYLLRKSKINVIPK.

Helical transmembrane passes span 19–39 (IFSINLLYMGILSGISYPLFV), 46–66 (VNLLFAIVIGAVFEIPLLLMY), 91–111 (FYTIFGISLWLTYVLSQPILG), 123–143 (QFEQFLIVESLFPLVLLIIAS), 146–166 (IYAKIVDILAIFQIIIAIFIA), 183–203 (LLSALLFDLSAFIFINAISYI), 225–247 (VAILSILDSYSNLNILFALMPIW), 283–303 (VLLLIFSTETIANVLENLLGF), 307–327 (FGLDGLLFIFWNFIIVAFAYL), 335–355 (LFSIVLTSLAIQIFLFFYLGY), and 369–389 (IEYTILRIMILPIIGAIVYLL).

The protein localises to the host membrane. Functionally, putative amino acid transporter. This is an uncharacterized protein from Saccharolobus islandicus (Sulfolobus islandicus).